Reading from the N-terminus, the 430-residue chain is Enolase (430 aa).

Q162 serves as a coordination point for (2R)-2-phosphoglycerate. E204 (proton donor) is an active-site residue. Residues D242, E289, and D316 each contribute to the Mg(2+) site. Positions 341, 370, 371, and 392 each coordinate (2R)-2-phosphoglycerate. Catalysis depends on K341, which acts as the Proton acceptor.

This sequence belongs to the enolase family. Requires Mg(2+) as cofactor.

The protein localises to the cytoplasm. It localises to the secreted. Its subcellular location is the cell surface. It catalyses the reaction (2R)-2-phosphoglycerate = phosphoenolpyruvate + H2O. Its pathway is carbohydrate degradation; glycolysis; pyruvate from D-glyceraldehyde 3-phosphate: step 4/5. Its function is as follows. Catalyzes the reversible conversion of 2-phosphoglycerate (2-PG) into phosphoenolpyruvate (PEP). It is essential for the degradation of carbohydrates via glycolysis. This Flavobacterium johnsoniae (strain ATCC 17061 / DSM 2064 / JCM 8514 / BCRC 14874 / CCUG 350202 / NBRC 14942 / NCIMB 11054 / UW101) (Cytophaga johnsonae) protein is Enolase.